The following is a 38-amino-acid chain: Large ribosomal subunit protein bL36 (38 aa).

It belongs to the bacterial ribosomal protein bL36 family.

This is Large ribosomal subunit protein bL36 from Enterococcus faecalis (strain ATCC 700802 / V583).